Consider the following 577-residue polypeptide: Outer spore wall assembly protein SHE10 (577 aa).

The signal sequence occupies residues Met-1 to Glu-23. Coiled coils occupy residues Asn-379–Glu-416 and Ile-513–Val-561. The segment covering Arg-525–Arg-545 has biased composition (basic and acidic residues). The tract at residues Arg-525–Leu-577 is disordered. Residues Ser-562–Leu-577 show a composition bias toward low complexity.

Belongs to the SHE10 family. In terms of assembly, component of the mitochondria-localized RNase mitochondrial RNA-processing (RNase MRP) composed of one single RNA encoded by the NME1 gene and at least 31 proteins. Absent in the nucleus-localized RNase MRP (NuMRP).

The protein localises to the mitochondrion. Involved in spore wall assembly. May be a component of the mitochondrial RNase MRP (MtMRP), a ribonucleoprotein endoribonuclease involved in the cleaving RNA transcripts to generate primers for DNA replication in mitochondria. This chain is Outer spore wall assembly protein SHE10, found in Saccharomyces cerevisiae (strain Lalvin EC1118 / Prise de mousse) (Baker's yeast).